The chain runs to 882 residues: Lon protease homolog, mitochondrial (882 aa).

The N-terminal 34 residues, 1-34, are a transit peptide targeting the mitochondrion; the sequence is MIHVLKSRSTLLTASSIVRTSVGSSSRYSQTRTY. The 214-residue stretch at 68–281 folds into the Lon N-terminal domain; it reads TLGLPLVSRP…KALVLLNRER (214 aa). 435–442 provides a ligand contact to ATP; the sequence is GPPGTGKT. In terms of domain architecture, Lon proteolytic spans 687–878; that stretch reads PLPHGIVMGL…DKVYEVAFSS (192 aa). Active-site residues include serine 784 and lysine 827.

This sequence belongs to the peptidase S16 family. As to quaternary structure, homohexamer or homoheptamer. Organized in a ring with a central cavity.

It localises to the mitochondrion matrix. It carries out the reaction Hydrolysis of proteins in presence of ATP.. Functionally, ATP-dependent serine protease that mediates the selective degradation of misfolded, unassembled or oxidatively damaged polypeptides as well as certain short-lived regulatory proteins in the mitochondrial matrix. May also have a chaperone function in the assembly of inner membrane protein complexes. Participates in the regulation of mitochondrial gene expression and in the maintenance of the integrity of the mitochondrial genome. Binds to mitochondrial DNA in a site-specific manner. The polypeptide is Lon protease homolog, mitochondrial (Phaeodactylum tricornutum (strain CCAP 1055/1)).